Reading from the N-terminus, the 339-residue chain is DNA-directed RNA polymerase subunit alpha (339 aa).

An alpha N-terminal domain (alpha-NTD) region spans residues 1 to 235 (MTIQKNWQEL…DQLNVFVNFE (235 aa)). The alpha C-terminal domain (alpha-CTD) stretch occupies residues 251–339 (FNPAFLKKVD…ELAKRFEDHY (89 aa)).

It belongs to the RNA polymerase alpha chain family. Homodimer. The RNAP catalytic core consists of 2 alpha, 1 beta, 1 beta' and 1 omega subunit. When a sigma factor is associated with the core the holoenzyme is formed, which can initiate transcription.

The enzyme catalyses RNA(n) + a ribonucleoside 5'-triphosphate = RNA(n+1) + diphosphate. Functionally, DNA-dependent RNA polymerase catalyzes the transcription of DNA into RNA using the four ribonucleoside triphosphates as substrates. The polypeptide is DNA-directed RNA polymerase subunit alpha (Nitrobacter winogradskyi (strain ATCC 25391 / DSM 10237 / CIP 104748 / NCIMB 11846 / Nb-255)).